Reading from the N-terminus, the 210-residue chain is MPMADHPATPAVVLAGGLAQRMGGGDKPLREIAGRSLLARVIDRLAPQCDTLALNANGDPARFAGFGLPVIADPVDGFPGPLAGVLAGLDWIAAHRPDAEWMLSAPADCPFLPSDLVVRLHQARLDQQADIAVAASAGRSHPVIALWPCRLQIDLRRALLADDIRKVDRFTARYPRAIVEWPVQPFDPFFNANTPEDVAEAERIALRDSR.

GTP is bound by residues 14–16 (LAG), K27, N55, D73, and D108. D108 contacts Mg(2+).

Belongs to the MobA family. Monomer. Mg(2+) is required as a cofactor.

Its subcellular location is the cytoplasm. The enzyme catalyses Mo-molybdopterin + GTP + H(+) = Mo-molybdopterin guanine dinucleotide + diphosphate. Transfers a GMP moiety from GTP to Mo-molybdopterin (Mo-MPT) cofactor (Moco or molybdenum cofactor) to form Mo-molybdopterin guanine dinucleotide (Mo-MGD) cofactor. This is Molybdenum cofactor guanylyltransferase from Rhodopseudomonas palustris (strain BisB5).